The primary structure comprises 342 residues: Putative aryl-alcohol dehydrogenase AAD16 (342 aa).

This sequence belongs to the aldo/keto reductase family. Aldo/keto reductase 2 subfamily.

In terms of biological role, putative aryl-alcohol dehydrogenase. The protein is Putative aryl-alcohol dehydrogenase AAD16 of Saccharomyces cerevisiae (strain ATCC 204508 / S288c) (Baker's yeast).